A 339-amino-acid chain; its full sequence is FR-33289 synthase (339 aa).

Fe(2+) is bound by residues histidine 150, aspartate 152, and histidine 288.

Belongs to the TfdA dioxygenase family. As to quaternary structure, homodimer. It depends on Fe(2+) as a cofactor.

It carries out the reaction 3-(N-acetyl-N-hydroxy)aminopropylphosphonate + 2-oxoglutarate + O2 = (R)-(3-(acetylhydroxyamino)-2-hydroxypropyl)phosphonate + succinate + CO2. Its pathway is antibiotic biosynthesis. Monooxygenase involved in the biosynthesis of the phosphonate antibiotic FR-33289, an antimalarial agent. Catalyzes the oxidative decarboxylation of the antibiotic FR-900098 (3-(N-acetyl-N-hydroxy)aminopropylphosphonate) to form FR-33289 ((R)-(3-(acetylhydroxyamino)-2-hydroxypropyl)phosphonate). This chain is FR-33289 synthase, found in Streptomyces rubellomurinus (strain ATCC 31215).